The sequence spans 1349 residues: Serine-aspartate repeat-containing protein D (1349 aa).

An N-terminal signal peptide occupies residues 1–35; sequence MLNRENKTAITRKGMVSNRLNKFSIRKYTVGTASI. The YSIRK-G/S signaling motif signature appears at 23 to 34; sequence FSIRKYTVGTAS. Residues 36–568 form a ligand binding A region region; that stretch reads LVGTTLIFGL…NNQSGGAGQE (533 aa). The tract at residues 54–185 is disordered; that stretch reads ESTNKELNEA…NKKVDAKTES (132 aa). Composition is skewed to polar residues over residues 62-71 and 94-108; these read EATTSASDNQ and EMVS…SNGN. A compositionally biased stretch (basic and acidic residues) spans 130–145; that stretch reads KSDEQASPKSTNEDLN. Composition is skewed to polar residues over residues 146–155 and 163–173; these read TKQTISNQEA and NKSVVNVQPTN. The span at 174–183 shows a compositional bias: basic and acidic residues; that stretch reads EENKKVDAKT. 5 CNA-B domains span residues 569–680, 681–791, 792–901, 902–1012, and 1013–1123; these read VYKI…IYKP, KYNL…YKTP, KYNL…FYKP, TYNL…YKTP, and KYSL…EEDT. Disordered regions lie at residues 856 to 883, 972 to 992, and 1081 to 1325; these read FETP…TSTT, YTPT…GLTT, and AGLT…SNNA. Polar residues-rich tracts occupy residues 860–869 and 972–981; these read SGYTPTQVGS and YTPTSVTSGN. Acidic residues-rich tracts occupy residues 1091–1101 and 1118–1288; these read TEDDKDADGGE and YFEE…DSDS. Residues 1312-1316 carry the LPXTG sorting signal motif; it reads LPETG. Thr-1315 bears the Pentaglycyl murein peptidoglycan amidated threonine mark. Positions 1316 to 1349 are cleaved as a propeptide — removed by sortase; sequence GSENNGSNNATLFGGLFAALGSLLLFGRRKKQNK.

This sequence belongs to the serine-aspartate repeat-containing protein (SDr) family. As to quaternary structure, interacts with host DSG1; this interaction increases S.aureus adherence to keratinocytes.

The protein resides in the secreted. Its subcellular location is the cell wall. In terms of biological role, cell surface-associated calcium-binding protein which plays an important role in adhesion and pathogenesis. Mediates interactions with components of the extracellular matrix such as host DSG1 to promote bacterial adhesion to host cells. Contributes to the resistance to killing by innate immune components such as neutrophils present in blood and thus attenuates bacterial clearance. This Staphylococcus aureus (strain NCTC 8325 / PS 47) protein is Serine-aspartate repeat-containing protein D (sdrD).